The primary structure comprises 461 residues: Cysteine--tRNA ligase (461 aa).

Cys-30 lines the Zn(2+) pocket. The 'HIGH' region signature appears at 32 to 42; that stretch reads VTVYDLCHIGH. Residues Cys-211, His-236, and Glu-240 each coordinate Zn(2+). Positions 268 to 272 match the 'KMSKS' region motif; it reads KMSKS. ATP is bound at residue Lys-271.

It belongs to the class-I aminoacyl-tRNA synthetase family. In terms of assembly, monomer. The cofactor is Zn(2+).

It is found in the cytoplasm. It catalyses the reaction tRNA(Cys) + L-cysteine + ATP = L-cysteinyl-tRNA(Cys) + AMP + diphosphate. This Shewanella sp. (strain MR-4) protein is Cysteine--tRNA ligase.